A 116-amino-acid polypeptide reads, in one-letter code: Vesicle-associated membrane protein 2 (116 aa).

Residues 1–28 are disordered; sequence MSATAATVPPAAPAGEGGPPAPPPNLTS. Ser2 bears the N-acetylserine mark. Over 2 to 94 the chain is Cytoplasmic; that stretch reads SATAATVPPA…KRKYWWKNLK (93 aa). One can recognise a v-SNARE coiled-coil homology domain in the interval 31-91; sequence RLQQTQAQVD…AKLKRKYWWK (61 aa). Residues 92-116 are required for interaction with SEPT8; that stretch reads NLKMMIILGVICAIILIIIIVYFST. A helical; Anchor for type IV membrane protein transmembrane segment spans residues 95–114; it reads MMIILGVICAIILIIIIVYF. The Vesicular segment spans residues 115 to 116; sequence ST.

Belongs to the synaptobrevin family. Part of the SNARE core complex containing SNAP25, VAMP2 and STX1A; this complex constitutes the basic catalytic machinery of the complex neurotransmitter release apparatus. Recruited to the SNARE complex following binding of the SNARE complex component STX1A to STXBP1. This complex binds to CPLX1. Interacts with VAPA and VAPB. Interacts (via N-terminus) with KCNB1 (via N-terminus and C-terminus); stimulates the channel inactivation rate of KCNB1. Interacts with POPDC1 and STX4. Interacts with WDFY2, PRKCZ and PRKCI. Forms a complex with WDFY2 and PRKCZ. Interacts with SEPT8; the interaction inhibits interaction of VAMP2 with SYP. Interacts with SYP; the interaction is inhibited by interaction with SEPT8. Interacts with PICALM. Interacts with alpha-synuclein/SNCA. Interacts with STX3 isoform 3B. Phosphorylated by PRKCZ in vitro and this phosphorylation is increased in the presence of WDFY2. Post-translationally, (Microbial infection) Targeted and hydrolyzed by C.botulinum neurotoxin type B (BoNT/B, botB); 20 hours after treatment of spinal cord cells almost all the protein has been digested. BoNT/B hydrolyzes the 76-Gln-|-Phe-77 bond and inhibits neurotransmitter release. In terms of processing, (Microbial infection) Targeted and hydrolyzed by C.tetani toxin (tetX); 20 hours after treatment of spinal cord cells almost all the protein has been digested. Tetanus toxin hydrolyzes the 76-Gln-|-Phe-77 bond and inhibits neurotransmitter release. As to expression, expressed in the outer plexiform layer of the retina (at protein level).

Its subcellular location is the cytoplasmic vesicle. The protein resides in the secretory vesicle. The protein localises to the synaptic vesicle membrane. It is found in the cell membrane. Functionally, involved in the targeting and/or fusion of transport vesicles to their target membrane. Major SNARE protein of synaptic vesicles which mediates fusion of synaptic vesicles to release neurotransmitters. Essential for fast vesicular exocytosis and activity-dependent neurotransmitter release as well as fast endocytosis that mediates rapid reuse of synaptic vesicles. Modulates the gating characteristics of the delayed rectifier voltage-dependent potassium channel KCNB1. This is Vesicle-associated membrane protein 2 (Vamp2) from Mus musculus (Mouse).